A 370-amino-acid chain; its full sequence is Muconate cycloisomerase 1 (370 aa).

Lys166 is an active-site residue. Mn(2+) contacts are provided by Asp195, Glu221, and Asp246.

This sequence belongs to the mandelate racemase/muconate lactonizing enzyme family. Homooctamer. The cofactor is Mn(2+).

The catalysed reaction is (S)-muconolactone = cis,cis-muconate + H(+). The protein operates within aromatic compound metabolism; beta-ketoadipate pathway; 5-oxo-4,5-dihydro-2-furylacetate from catechol: step 2/3. Functionally, catalyzes a syn cycloisomerization. The polypeptide is Muconate cycloisomerase 1 (catB) (Acinetobacter baylyi (strain ATCC 33305 / BD413 / ADP1)).